The primary structure comprises 182 residues: Crossover junction endodeoxyribonuclease RuvC (182 aa).

Catalysis depends on residues Asp-7, Glu-69, and Asp-141. Positions 7, 69, and 141 each coordinate Mg(2+).

This sequence belongs to the RuvC family. Homodimer which binds Holliday junction (HJ) DNA. The HJ becomes 2-fold symmetrical on binding to RuvC with unstacked arms; it has a different conformation from HJ DNA in complex with RuvA. In the full resolvosome a probable DNA-RuvA(4)-RuvB(12)-RuvC(2) complex forms which resolves the HJ. Mg(2+) is required as a cofactor.

The protein resides in the cytoplasm. The enzyme catalyses Endonucleolytic cleavage at a junction such as a reciprocal single-stranded crossover between two homologous DNA duplexes (Holliday junction).. The RuvA-RuvB-RuvC complex processes Holliday junction (HJ) DNA during genetic recombination and DNA repair. Endonuclease that resolves HJ intermediates. Cleaves cruciform DNA by making single-stranded nicks across the HJ at symmetrical positions within the homologous arms, yielding a 5'-phosphate and a 3'-hydroxyl group; requires a central core of homology in the junction. The consensus cleavage sequence is 5'-(A/T)TT(C/G)-3'. Cleavage occurs on the 3'-side of the TT dinucleotide at the point of strand exchange. HJ branch migration catalyzed by RuvA-RuvB allows RuvC to scan DNA until it finds its consensus sequence, where it cleaves and resolves the cruciform DNA. The polypeptide is Crossover junction endodeoxyribonuclease RuvC (Delftia acidovorans (strain DSM 14801 / SPH-1)).